The primary structure comprises 327 residues: Endo-1,4-beta-xylanase C (327 aa).

The first 15 residues, 1–15 (MKFSSLLFTASLVAA), serve as a signal peptide directing secretion. Positions 43 to 325 (TITDPNLLQS…KPAYTAVVNA (283 aa)) constitute a GH10 domain. Glutamate 154 functions as the Proton donor in the catalytic mechanism. The active-site Nucleophile is glutamate 262. A disulfide bridge connects residues cysteine 280 and cysteine 286.

Belongs to the glycosyl hydrolase 10 (cellulase F) family.

It is found in the secreted. The catalysed reaction is Endohydrolysis of (1-&gt;4)-beta-D-xylosidic linkages in xylans.. It participates in glycan degradation; xylan degradation. Its activity is regulated as follows. Weakly inhibited by the wheat xylanase inhibiting protein I (XIP-I). In terms of biological role, endo-1,4-beta-xylanase involved in the hydrolysis of xylan, a major structural heterogeneous polysaccharide found in plant biomass representing the second most abundant polysaccharide in the biosphere, after cellulose. Plays an important role in causing fusarium head blight (FHB) on cereal crops. This Gibberella zeae (strain ATCC MYA-4620 / CBS 123657 / FGSC 9075 / NRRL 31084 / PH-1) (Wheat head blight fungus) protein is Endo-1,4-beta-xylanase C (XYLC).